Consider the following 902-residue polypeptide: Inter-alpha-trypsin inhibitor heavy chain H1 (902 aa).

Residues 1–28 (MDGTMGLQGLLCLCLASHLALQAMPTQG) form the signal peptide. The region spanning 29 to 158 (SPTDSTKGNK…KATFQLTYEE (130 aa)) is the VIT domain. The S-linked (Hex...) cysteine glycan is linked to C52. N69 carries an N-linked (GlcNAc...) asparagine glycan. S121 is modified (phosphoserine). A glycan (N-linked (GlcNAc...) asparagine) is linked at N277. Residues 282-442 (NKNVVFVIDI…WNFLEVRALE (161 aa)) enclose the VWFA domain. Phosphothreonine is present on residues T394 and T399. Residues 637 to 651 (SASQPSPTHPSSSIQ) are compositionally biased toward polar residues. Positions 637–656 (SASQPSPTHPSSSIQKLPDR) are disordered. The O-linked (GalNAc...) serine glycan is linked to S639. O-linked (GalNAc...) threonine glycosylation is present at T644. The residue at position 663 (D663) is an Aspartate 1-(chondroitin 4-sulfate)-ester. The propeptide occupies 664-902 (PHFIIRVPQK…HTDYIVPDIF (239 aa)). Residue N741 is glycosylated (N-linked (GlcNAc...) asparagine).

This sequence belongs to the ITIH family. I-alpha-I plasma protease inhibitors are assembled from one or two heavy chains (HC) and one light chain, bikunin. Inter-alpha-inhibitor (I-alpha-I) is composed of ITIH1/HC1, ITIH2/HC2 and bikunin. Interacts with TNFAIP6 (via Link and CUB domains). In terms of processing, heavy chains are linked to bikunin via chondroitin 4-sulfate esterified to the alpha-carboxyl of the C-terminal aspartate after propeptide cleavage. Post-translationally, the S-linked glycan is composed of two 6-carbon sugars, possibly Glc or Gal.

It is found in the secreted. May act as a carrier of hyaluronan in serum or as a binding protein between hyaluronan and other matrix protein, including those on cell surfaces in tissues to regulate the localization, synthesis and degradation of hyaluronan which are essential to cells undergoing biological processes. The protein is Inter-alpha-trypsin inhibitor heavy chain H1 (ITIH1) of Sus scrofa (Pig).